A 119-amino-acid chain; its full sequence is Large ribosomal subunit protein bL20 (119 aa).

This sequence belongs to the bacterial ribosomal protein bL20 family.

Binds directly to 23S ribosomal RNA and is necessary for the in vitro assembly process of the 50S ribosomal subunit. It is not involved in the protein synthesizing functions of that subunit. This is Large ribosomal subunit protein bL20 from Streptococcus mutans serotype c (strain ATCC 700610 / UA159).